Consider the following 215-residue polypeptide: FBD domain-containing protein At3g58975 (215 aa).

The FBD domain maps to 122 to 199 (RSLTSCPVKK…KLSSCNVQLL (78 aa)).

This Arabidopsis thaliana (Mouse-ear cress) protein is FBD domain-containing protein At3g58975.